We begin with the raw amino-acid sequence, 369 residues long: Somatostatin receptor type 2 (369 aa).

The Extracellular segment spans residues 1–43; sequence MDMAYELLNGSQPWLSSPFDLNGSVATANSSNQTEPYYDLTSN. N-linked (GlcNAc...) asparagine glycans are attached at residues Asn-9, Asn-22, Asn-29, and Asn-32. Residues 44 to 67 traverse the membrane as a helical segment; that stretch reads AVLTFIYFVVCIIGLCGNTLVIYV. Residues 68-78 lie on the Cytoplasmic side of the membrane; that stretch reads ILRYAKMKTIT. The helical transmembrane segment at 79-103 threads the bilayer; it reads NIYILNLAIADELFMLGLPFLAMQV. Topologically, residues 104-118 are extracellular; it reads ALVHWPFGKAICRVV. Residues Cys-115 and Cys-193 are joined by a disulfide bond. The chain crosses the membrane as a helical span at residues 119-138; it reads MTVDGINQFTSIFCLTVMSI. The Cytoplasmic segment spans residues 139 to 161; the sequence is DRYLAVVHPIKSAKWRRPRTAKM. A helical membrane pass occupies residues 162-181; it reads INVAVWGVSLLVILPIMIYA. Residues 182–207 are Extracellular-facing; it reads GLRSNQWGRSSCTINWPGESGAWYTG. The chain crosses the membrane as a helical span at residues 208–229; it reads FIIYAFILGFLVPLTIICLCYL. Over 230–253 the chain is Cytoplasmic; the sequence is FIIIKVKSSGIRVGSSKRKKSEKK. Residues 254–278 form a helical membrane-spanning segment; that stretch reads VTRMVSIVVAVFIFCWLPFYIFNVS. Topologically, residues 279-288 are extracellular; sequence SVSVAISPTP. A helical transmembrane segment spans residues 289–303; it reads ALKGMFDFVVVLTYA. The Cytoplasmic portion of the chain corresponds to 304–369; it reads NSCANPILYA…LLNGDLQTSI (66 aa). A lipid anchor (S-palmitoyl cysteine) is attached at Cys-328. Ser-341, Ser-343, and Ser-348 each carry phosphoserine. 2 positions are modified to phosphothreonine: Thr-353 and Thr-354.

This sequence belongs to the G-protein coupled receptor 1 family. In terms of assembly, homodimer and heterodimer with SSTR3 and SSTR5. Heterodimerization with SSTR3 inactivates SSTR3 receptor function. Heterodimerization with SSTR5 is enhanced by agonist stimulation of SSTR2 and increases SSTR2 cell growth inhibition activity. Following agonist stimulation, homodimers dissociate into monomers which is required for receptor internalization. Interacts with beta-arrestin; this interaction is necessary for receptor internalization and is destabilized by heterodimerization with SSTR5 which results in increased recycling of SSTR2 to the cell surface. Interacts (via C-terminus) with SHANK1 (via PDZ domain). Post-translationally, phosphorylated on serine and threonine residues in response to agonist stimulation, leading to receptor desensitization and rapid internalization. Phosphorylated to a greater extent on serine than threonine residues. Threonine phosphorylation is required for arrestin binding and receptor endocytosis but is not necessary for desensitization.

The protein resides in the cell membrane. It is found in the cytoplasm. In terms of biological role, receptor for somatostatin-14 and -28. This receptor is coupled via pertussis toxin sensitive G proteins to inhibition of adenylyl cyclase. In addition it stimulates phosphotyrosine phosphatase and PLC via pertussis toxin insensitive as well as sensitive G proteins. Inhibits calcium entry by suppressing voltage-dependent calcium channels. Acts as the functionally dominant somatostatin receptor in pancreatic alpha- and beta-cells where it mediates the inhibitory effect of somatostatin-14 on hormone secretion. Inhibits cell growth through enhancement of MAPK1 and MAPK2 phosphorylation and subsequent up-regulation of CDKN1B. Stimulates neuronal migration and axon outgrowth and may participate in neuron development and maturation during brain development. Mediates negative regulation of insulin receptor signaling through PTPN6. Inactivates SSTR3 receptor function following heterodimerization. The protein is Somatostatin receptor type 2 (SSTR2) of Sus scrofa (Pig).